We begin with the raw amino-acid sequence, 1124 residues long: SH3 and PX domain-containing protein 2A (1124 aa).

In terms of domain architecture, PX spans 4 to 128; it reads YCVQDATVVD…RFFEARPEDV (125 aa). Positions 166–225 constitute an SH3 1 domain; that stretch reads MILEQYVVVSNYKKQENSELSLQAGEVVDVIEKNESGWWFVSTSEEQGWVPATYLEAQNG. Residue T256 is modified to Phosphothreonine. Residues 266 to 325 form the SH3 2 domain; that stretch reads SREEKYVTVQPYTSQSKDEIGFEKGVTVEVIRKNLEGWWYIRYLGKEGWAPASYLKKAKD. Phosphoserine is present on residues S405 and S420. Disordered regions lie at residues 414 to 443, 504 to 672, 692 to 830, and 886 to 952; these read QRAQ…PKPP, RKKP…KLKA, SVTI…PKKE, and YLVA…GKTS. Residues 447–506 form the SH3 3 domain; it reads SVEVEYYTIAEFQSCISDGISFRGGQKAEVIDKNSGGWWYVQIGEKEGWAPASYIDKRKK. Phosphoserine occurs at positions 546 and 566. A compositionally biased stretch (basic and acidic residues) spans 575–585; that stretch reads SGDRGSGDKHP. The residue at position 592 (S592) is a Phosphoserine. Over residues 607-619 the composition is skewed to acidic residues; sequence SSEDVALEEETIY. Composition is skewed to low complexity over residues 633–669 and 692–709; these read SARG…SLLK and SVTI…SSLS. Phosphoserine is present on S643. Over residues 713-739 the composition is skewed to basic and acidic residues; sequence GDLKPRSASDAGIRDTPKVGTKKDPDV. The residue at position 728 (T728) is a Phosphothreonine. 3 positions are modified to phosphoserine: S764, S766, and S812. Phosphothreonine is present on T822. In terms of domain architecture, SH3 4 spans 833-892; that stretch reads GQGATYVTCSAYQKVQDSEISFPEGAEVHVLEKAESGWWYVRFGELEGWAPSHYLVAEEN. The stretch at 907–937 forms a coiled coil; it reads SSQNEGKSDSLEKIEKRVQALNTVNQSKRAT. Basic and acidic residues predominate over residues 912 to 924; sequence GKSDSLEKIEKRV. Residues 926–935 show a composition bias toward polar residues; that stretch reads ALNTVNQSKR. Phosphoserine is present on residues S993, S1007, S1008, and S1029. Residues 1020–1050 form a disordered region; the sequence is KGRLAERAASQGSESPLLPTQRKGIPVSPVR. Residues 1063–1124 form the SH3 5 domain; sequence NLKDVYISIA…VPSNYLEKKN (62 aa).

Belongs to the SH3PXD2 family. As to quaternary structure, interacts with ADAM12, ADAM15 and ADAM19. Interacts with NOXO1. Interacts (via SH3 domains) with NOXA1; the interaction is direct. Interacts (via N-terminus) with CYBA. Interacts with FASLG. Interacts (via PX domain) with RAB40B (GTP-bound); interaction promotes invadopodia-mediated extracellular matrix degradation. In terms of processing, tyrosine phosphorylated by SRC. Phosphorylation plays a regulatory role in the protein localization. The intramolecular interaction of the PX domain with the third SH3 domain maintains the protein in the cytoplasm and phosphorylation disrupts this interaction, resulting in the redistribution of the protein from cytoplasm to the perimembrane region. Phosphorylated on serine upon DNA damage, probably by ATM or ATR. As to expression, widely expressed. Not found in the spleen and testis.

The protein localises to the cytoplasm. It localises to the cell projection. Its subcellular location is the podosome. Its function is as follows. Adapter protein involved in invadopodia and podosome formation, extracellular matrix degradation and invasiveness of some cancer cells. Binds matrix metalloproteinases (ADAMs), NADPH oxidases (NOXs) and phosphoinositides. Acts as an organizer protein that allows NOX1- or NOX3-dependent reactive oxygen species (ROS) generation and ROS localization. In association with ADAM12, mediates the neurotoxic effect of amyloid-beta peptide. This is SH3 and PX domain-containing protein 2A from Mus musculus (Mouse).